The sequence spans 947 residues: ATP-dependent RNA helicase DDX42 (947 aa).

A compositionally biased stretch (gly residues) spans 1–18 (MNWNKGGSGNKRGFGFGG). Disordered regions lie at residues 1-54 (MNWN…NQLP), 68-114 (EENS…PLEA), and 176-200 (NLEYDSDGNPIAPTTKRIIDPLPPI). Polar residues predominate over residues 34-54 (VSHSAFQSASSKYGSTSNQLP). Residues 68-81 (EENSYFDDEEEDSS) show a composition bias toward acidic residues. Residues 112-152 (LEAFMAEVEDQAAKDMRKLEERDKEKANARGIRDDIEEEDD) adopt a coiled-coil conformation. The Q motif signature appears at 250–278 (SSFAHFGFDEQLLHQIRKSEYTQPTPIQC). The Helicase ATP-binding domain occupies 281–456 (IPVALSGRDM…RDILVDPIRV (176 aa)). 294 to 301 (AKTGSGKT) provides a ligand contact to ATP. A DEAD box motif is present at residues 404–407 (DEAD). The Helicase C-terminal domain occupies 484-629 (WLTRRLVEFT…YVSKELLDLA (146 aa)). Disordered regions lie at residues 731–754 (SAGSLSSVPSAHPPSGKLPAEAAP) and 797–947 (GASA…RWDS). Positions 805-929 (GGRERHSDSK…RKEGTREAKT (125 aa)) are enriched in basic and acidic residues. Over residues 938–947 (PKRKKSRWDS) the composition is skewed to basic residues.

It belongs to the DEAD box helicase family. DDX42 subfamily. Transient component of the SF3B subcomplex of the 17S U2 SnRNP complex.

Its subcellular location is the cytoplasm. It localises to the nucleus. The enzyme catalyses ATP + H2O = ADP + phosphate + H(+). Its function is as follows. ATP-dependent RNA helicase that binds to partially double-stranded RNAs (dsRNAs) in order to unwind RNA secondary structures. Unwinding is promoted in the presence of single-strand binding proteins. Also mediates RNA duplex formation thereby displacing the single-strand RNA binding protein. ATP and ADP modulate its activity: ATP binding and hydrolysis by DDX42 triggers RNA strand separation, whereas the ADP-bound form of the protein triggers annealing of complementary RNA strands. Required for assembly of the 17S U2 SnRNP complex of the spliceosome, a large ribonucleoprotein complex that removes introns from transcribed pre-mRNAs: DDX42 associates transiently with the SF3B subcomplex of the 17S U2 SnRNP complex and is released after fulfilling its role in the assembly of 17S U2 SnRNP. The chain is ATP-dependent RNA helicase DDX42 (ddx42) from Xenopus laevis (African clawed frog).